Consider the following 1079-residue polypeptide: Spermatogenesis-associated protein 31G1 (1079 aa).

Disordered regions lie at residues 97-145 (EVEE…GSEG), 261-281 (EDLE…SPSV), 297-317 (GVLS…LEVL), 331-362 (KMPQ…EGGL), 376-412 (EKPQ…RYKP), 506-566 (NLWA…SPPP), 637-678 (VPVF…EQRK), and 840-975 (PHSS…NHPA). Positions 98–113 (VEEEGEEEEEGEDEAS) are enriched in acidic residues. Pro residues predominate over residues 336-345 (FEPPMPPPCQ). The span at 398 to 412 (LQRESSLEDPSRYKP) shows a compositional bias: basic and acidic residues. 2 stretches are compositionally biased toward low complexity: residues 551–562 (NSSASRSPSLAL) and 645–655 (SSPSSNSVSKS). Over residues 669–678 (PDGEAVEQRK) the composition is skewed to basic and acidic residues. Residues 942–951 (AKKREHPRKP) show a composition bias toward basic residues.

Dispensable for normal development and fertility. The protein is Spermatogenesis-associated protein 31G1 of Homo sapiens (Human).